A 116-amino-acid chain; its full sequence is Aspartate 1-decarboxylase (116 aa).

Ser25 serves as the catalytic Schiff-base intermediate with substrate; via pyruvic acid. At Ser25 the chain carries Pyruvic acid (Ser). Thr57 is a binding site for substrate. The Proton donor role is filled by Tyr58. 73–75 lines the substrate pocket; sequence GAA.

Belongs to the PanD family. Heterooctamer of four alpha and four beta subunits. Pyruvate serves as cofactor. Is synthesized initially as an inactive proenzyme, which is activated by self-cleavage at a specific serine bond to produce a beta-subunit with a hydroxyl group at its C-terminus and an alpha-subunit with a pyruvoyl group at its N-terminus.

Its subcellular location is the cytoplasm. It catalyses the reaction L-aspartate + H(+) = beta-alanine + CO2. Its pathway is cofactor biosynthesis; (R)-pantothenate biosynthesis; beta-alanine from L-aspartate: step 1/1. Functionally, catalyzes the pyruvoyl-dependent decarboxylation of aspartate to produce beta-alanine. This Leptospira borgpetersenii serovar Hardjo-bovis (strain JB197) protein is Aspartate 1-decarboxylase.